A 234-amino-acid chain; its full sequence is MYRINLTTFTLLLVLAVGSLMSESLHPSDGAINDLYEYLLQREYAAPVSYADHQIKRKAVRSPSLRLRFGRRSDPSVPLRPEEDELIDQKAIRAPQLRLRFGRNDPLWTSFNENALLEENFEKRAPSQRLRWGRSNLFGNLVNQFQQDDVMQQKTIRAPQLRLRFGRTDPSWAMYNEHQLTTGQQAQPANEASEKRAPTQRLRWGRSDPALAKDSSEDKALDVEESENTNADDK.

An N-terminal signal peptide occupies residues 1 to 22 (MYRINLTTFTLLLVLAVGSLMS). Residues 23–56 (ESLHPSDGAINDLYEYLLQREYAAPVSYADHQIK) constitute a propeptide that is removed on maturation. Phenylalanine amide is present on residues Phe69 and Phe101. The residue at position 132 (Trp132) is a Tryptophan amide. At Phe165 the chain carries Phenylalanine amide. The segment covering 181 to 190 (TTGQQAQPAN) has biased composition (polar residues). The tract at residues 181-234 (TTGQQAQPANEASEKRAPTQRLRWGRSDPALAKDSSEDKALDVEESENTNADDK) is disordered. At Trp204 the chain carries Tryptophan amide. Positions 207–234 (SDPALAKDSSEDKALDVEESENTNADDK) are excised as a propeptide.

The protein belongs to the NPY family. Expressed in all body parts of larva, pupae and adults.

The protein resides in the secreted. Functionally, plays a role in controlling food intake and regulating body size. This is Short neuropeptide F from Anopheles gambiae (African malaria mosquito).